A 139-amino-acid polypeptide reads, in one-letter code: D-ribose pyranase (139 aa).

The Proton donor role is filled by histidine 20. Substrate-binding positions include aspartate 28, histidine 106, and 128 to 130; that span reads YAN.

Belongs to the RbsD / FucU family. RbsD subfamily. In terms of assembly, homodecamer.

Its subcellular location is the cytoplasm. It carries out the reaction beta-D-ribopyranose = beta-D-ribofuranose. Its pathway is carbohydrate metabolism; D-ribose degradation; D-ribose 5-phosphate from beta-D-ribopyranose: step 1/2. Its function is as follows. Catalyzes the interconversion of beta-pyran and beta-furan forms of D-ribose. The chain is D-ribose pyranase from Aliivibrio salmonicida (strain LFI1238) (Vibrio salmonicida (strain LFI1238)).